A 190-amino-acid polypeptide reads, in one-letter code: Membrane protein FAM174A (190 aa).

The signal sequence occupies residues 1–29; it reads MPTRRGCSGPCHFLASAFVLLLLPALNQS. N-linked (GlcNAc...) asparagine glycosylation is found at Asn27 and Asn83. The Extracellular portion of the chain corresponds to 30 to 123; it reads VVLPSTVPRA…NPSDKPMTQR (94 aa). The disordered stretch occupies residues 37–119; that stretch reads PRAVQESKPL…AVSPNPSDKP (83 aa). A helical transmembrane segment spans residues 124–144; it reads ALTVLVVVSAAVLVYFVVRTV. Topologically, residues 145 to 190 are cytoplasmic; it reads RMRRRNRKTRRYGVLDTNIENMELTPLEQDDEDDDNTLFDANHPRR. The disordered stretch occupies residues 168–190; that stretch reads LTPLEQDDEDDDNTLFDANHPRR. The segment covering 172–181 has biased composition (acidic residues); that stretch reads EQDDEDDDNT.

It belongs to the FAM174 family.

The protein localises to the membrane. The chain is Membrane protein FAM174A (Fam174a) from Rattus norvegicus (Rat).